Here is a 219-residue protein sequence, read N- to C-terminus: 7-cyano-7-deazaguanine synthase (219 aa).

Residue 10–20 (FSGGQDSTTCL) coordinates ATP. C187, C196, C199, and C202 together coordinate Zn(2+).

It belongs to the QueC family. Homodimer. It depends on Zn(2+) as a cofactor.

The catalysed reaction is 7-carboxy-7-deazaguanine + NH4(+) + ATP = 7-cyano-7-deazaguanine + ADP + phosphate + H2O + H(+). The protein operates within purine metabolism; 7-cyano-7-deazaguanine biosynthesis. Catalyzes the ATP-dependent conversion of 7-carboxy-7-deazaguanine (CDG) to 7-cyano-7-deazaguanine (preQ(0)). This Lysinibacillus sphaericus (strain C3-41) protein is 7-cyano-7-deazaguanine synthase.